The sequence spans 444 residues: Mitogen-activated protein kinase mpk-1 (444 aa).

Composition is skewed to polar residues over residues 1 to 17 and 24 to 56; these read MPTW…TTRN and GHPQ…HVRQ. The interval 1–56 is disordered; the sequence is MPTWIPNNLCAQPTTRNAKPPSNGHPQATQQQSAPGSLAYRNSSNIPNGATNHVRQ. Residues 96–384 enclose the Protein kinase domain; that stretch reads YVNLSYIGEG…IEQALAHPYL (289 aa). ATP-binding positions include 102–110 and K125; that span reads IGEGAYGMV. The active-site Proton acceptor is the D220. Residue T256 is modified to Phosphothreonine. Positions 256-258 match the TXY motif; it reads TEY. Position 258 is a phosphotyrosine (Y258).

The protein belongs to the protein kinase superfamily. CMGC Ser/Thr protein kinase family. MAP kinase subfamily. In terms of assembly, isoform a interacts with gck-1 (via N-terminus). It depends on Mg(2+) as a cofactor. Post-translationally, isoform a is phosphorylated at the pachytene stage during oogenesis and is negatively regulated by gck-1. Isoform b is phosphorylated in proximal oocytes. In terms of tissue distribution, expressed in cells lining the rectum. Isoform a is expressed in nervous system, body wall muscles and posterior intestine. Isoform b expression may be restricted to germline.

It carries out the reaction L-seryl-[protein] + ATP = O-phospho-L-seryl-[protein] + ADP + H(+). It catalyses the reaction L-threonyl-[protein] + ATP = O-phospho-L-threonyl-[protein] + ADP + H(+). Activated by dual phosphorylation at Thr-256 and Tyr-258. May be inactivated by lip-1-mediated dephosphorylation. Functionally, functions in let-60 Ras signaling pathway; acts downstream of lin-45 raf kinase, but before the lin-1 gene product in controlling vulval cell differentiation. Plays a negative role in proximal germline proliferation in the mitotic zone. Required for progression of developing oocytes through the pachytene stage, perhaps acting after efl-1/dpl-1-mediated gene activation and before gld-1 down-regulation. May play a role in global X chromosome reactivation or be indirectly required for progression of germ cells through meiosis to the point where X reactivation occurs. In oocytes, inhibits the activity of the chloride channel clh-3, likely by activating gck-3. Plays a role in response to M.nematophilum-mediated bacterial infection by promoting tail swelling and preventing constipation. Involved in fluid homeostasis. In addition, involved in the up-regulation of lysozyme ilys-3 expression in the intestine in responses to M.nematophilum-mediated bacterial infection. By phosphorylating transcription factor skn-1 (isoform c) may play a role in increasing life span downstream of lin-45, let-60 and mek-2. By up-regulating cep-1 and down-regulating gld-1 expression in the late pachytene stage, plays a role in germline apoptosis in response to DNA damage. Regulates egl-1 expression in response to DNA damage, probably upstream of cep-1. Its function is as follows. Suppresses germline tumor formation by preventing the dedifferentiation of secondary spermatocytes probably upstream of rskn-1. This is Mitogen-activated protein kinase mpk-1 (mpk-1) from Caenorhabditis elegans.